Here is a 183-residue protein sequence, read N- to C-terminus: Large ribosomal subunit protein uL5 (183 aa).

The protein belongs to the universal ribosomal protein uL5 family. Part of the 50S ribosomal subunit; contacts the 5S rRNA and probably tRNA. Forms a bridge to the 30S subunit in the 70S ribosome.

Functionally, this is one of the proteins that bind and probably mediate the attachment of the 5S RNA into the large ribosomal subunit, where it forms part of the central protuberance. In the 70S ribosome it contacts protein S13 of the 30S subunit (bridge B1b), connecting the 2 subunits; this bridge is implicated in subunit movement. May contact the P site tRNA; the 5S rRNA and some of its associated proteins might help stabilize positioning of ribosome-bound tRNAs. The sequence is that of Large ribosomal subunit protein uL5 from Thermococcus kodakarensis (strain ATCC BAA-918 / JCM 12380 / KOD1) (Pyrococcus kodakaraensis (strain KOD1)).